The sequence spans 185 residues: Large ribosomal subunit protein uL5 (185 aa).

It belongs to the universal ribosomal protein uL5 family. Part of the 50S ribosomal subunit; part of the 5S rRNA/L5/L18/L25 subcomplex. Contacts the 5S rRNA and the P site tRNA. Forms a bridge to the 30S subunit in the 70S ribosome.

This is one of the proteins that bind and probably mediate the attachment of the 5S RNA into the large ribosomal subunit, where it forms part of the central protuberance. In the 70S ribosome it contacts protein S13 of the 30S subunit (bridge B1b), connecting the 2 subunits; this bridge is implicated in subunit movement. Contacts the P site tRNA; the 5S rRNA and some of its associated proteins might help stabilize positioning of ribosome-bound tRNAs. This is Large ribosomal subunit protein uL5 from Bartonella tribocorum (strain CIP 105476 / IBS 506).